A 590-amino-acid chain; its full sequence is Phosphate-repressible phosphate permease pho-4 (590 aa).

8 helical membrane passes run 6–26 (FDYL…NIGA), 44–64 (YLQA…GVGA), 85–105 (ALLM…LTMA), 118–138 (IMGG…VQWV), 149–169 (VFLA…IIFL), 186–206 (FVMV…LLLW), 220–240 (IAGT…IFLM), and 246–266 (IVIL…PLLL). Residues 267 to 466 (RRGEVPPPPA…GALPEKGKAD (200 aa)) are Cytoplasmic-facing. The interval 297-361 (ARRAAQNGDS…PQIKTMVGPR (65 aa)) is disordered. A compositionally biased stretch (polar residues) spans 313 to 322 (VTSSTSNPSA). The span at 325–345 (DGEKGATITKDDSSYSHDHSE) shows a compositional bias: basic and acidic residues. Helical transmembrane passes span 467 to 487 (VPVW…WTYG), 506 to 525 (GFSM…RLKL), 527 to 547 (VSTT…SGTW), and 561 to 581 (GWFI…GIII).

The protein belongs to the inorganic phosphate transporter (PiT) (TC 2.A.20) family.

It is found in the cell membrane. Phosphate transport activity is competitively inhibited by vanadate and arsenate. Functionally, high-affinity transporter for external inorganic phosphate. Acts probably as a sodium-phosphate symporter. Component of the high affinity phosphate transport system II (ptsII) necessary for scavenging phosphorus from the environment under conditions of limiting phosphorus. The sequence is that of Phosphate-repressible phosphate permease pho-4 from Neurospora crassa (strain ATCC 24698 / 74-OR23-1A / CBS 708.71 / DSM 1257 / FGSC 987).